We begin with the raw amino-acid sequence, 190 residues long: MAVFNKLFKRRHSVSEEIKKDDLQEEVEATETEETVEEVIEEIPEKSELELANERADEFENKYLRAHAEMQNIQRRSSEERQQLQRYRSQDLAKAILPSLDNLERALAVEGLTDDVKKGLEMTRDSLIQALKEEGVEEVEVDSFDHNFHMAVQTLPADDEHPADSIAEVFQKGYKLHERLLRPAMVVVYN.

Belongs to the GrpE family. In terms of assembly, homodimer.

The protein resides in the cytoplasm. Participates actively in the response to hyperosmotic and heat shock by preventing the aggregation of stress-denatured proteins, in association with DnaK and GrpE. It is the nucleotide exchange factor for DnaK and may function as a thermosensor. Unfolded proteins bind initially to DnaJ; upon interaction with the DnaJ-bound protein, DnaK hydrolyzes its bound ATP, resulting in the formation of a stable complex. GrpE releases ADP from DnaK; ATP binding to DnaK triggers the release of the substrate protein, thus completing the reaction cycle. Several rounds of ATP-dependent interactions between DnaJ, DnaK and GrpE are required for fully efficient folding. The protein is Protein GrpE of Streptococcus agalactiae serotype III (strain NEM316).